We begin with the raw amino-acid sequence, 88 residues long: Large ribosomal subunit protein bL27 (88 aa).

A disordered region spans residues 1–24; it reads MAHKKAGGSSRNGRDSAGQRRGVK.

It belongs to the bacterial ribosomal protein bL27 family.

The sequence is that of Large ribosomal subunit protein bL27 from Syntrophobacter fumaroxidans (strain DSM 10017 / MPOB).